The following is an 895-amino-acid chain: Alanine--tRNA ligase (895 aa).

The Zn(2+) site is built by H577, H581, C680, and H684.

Belongs to the class-II aminoacyl-tRNA synthetase family. It depends on Zn(2+) as a cofactor.

The protein resides in the cytoplasm. It catalyses the reaction tRNA(Ala) + L-alanine + ATP = L-alanyl-tRNA(Ala) + AMP + diphosphate. Its function is as follows. Catalyzes the attachment of alanine to tRNA(Ala) in a two-step reaction: alanine is first activated by ATP to form Ala-AMP and then transferred to the acceptor end of tRNA(Ala). Also edits incorrectly charged Ser-tRNA(Ala) and Gly-tRNA(Ala) via its editing domain. The chain is Alanine--tRNA ligase from Kocuria rhizophila (strain ATCC 9341 / DSM 348 / NBRC 103217 / DC2201).